The sequence spans 536 residues: C-22 sterol desaturase ERG5A (536 aa).

A helical transmembrane segment spans residues 41 to 61 (VWTWVFTLVALCIAYDQIAYI). Cys-481 contributes to the heme binding site.

The protein belongs to the cytochrome P450 family. The cofactor is heme.

It is found in the endoplasmic reticulum membrane. It carries out the reaction 5-dehydroepisterol + NADPH + O2 + H(+) = ergosta-5,7,22,24(28)-tetraen-3beta-ol + NADP(+) + 2 H2O. It functions in the pathway steroid metabolism; ergosterol biosynthesis. Functionally, C-22 sterol desaturase; part of the third module of ergosterol biosynthesis pathway that includes the late steps of the pathway. ERG5A and ERG5B convert 5-dehydroepisterol into ergosta-5,7,22,24(28)-tetraen-3beta-ol by forming the C-22(23) double bond in the sterol side chain. The third module or late pathway involves the ergosterol synthesis itself through consecutive reactions that mainly occur in the endoplasmic reticulum (ER) membrane. Firstly, the squalene synthase ERG9 catalyzes the condensation of 2 farnesyl pyrophosphate moieties to form squalene, which is the precursor of all steroids. Squalene synthase is crucial for balancing the incorporation of farnesyl diphosphate (FPP) into sterol and nonsterol isoprene synthesis. Secondly, squalene is converted into lanosterol by the consecutive action of the squalene epoxidase ERG1 and the lanosterol synthase ERG7. Then, the delta(24)-sterol C-methyltransferase ERG6 methylates lanosterol at C-24 to produce eburicol. Eburicol is the substrate of the sterol 14-alpha demethylase encoded by CYP51A, CYP51B and CYP51C, to yield 4,4,24-trimethyl ergosta-8,14,24(28)-trienol. CYP51B encodes the enzyme primarily responsible for sterol 14-alpha-demethylation, and plays an essential role in ascospore formation. CYP51A encodes an additional sterol 14-alpha-demethylase, induced on ergosterol depletion and responsible for the intrinsic variation in azole sensitivity. The third CYP51 isoform, CYP51C, does not encode a sterol 14-alpha-demethylase, but is required for full virulence on host wheat ears. The C-14 reductase ERG24 then reduces the C14=C15 double bond which leads to 4,4-dimethylfecosterol. A sequence of further demethylations at C-4, involving the C-4 demethylation complex containing the C-4 methylsterol oxidases ERG25, the sterol-4-alpha-carboxylate 3-dehydrogenase ERG26 and the 3-keto-steroid reductase ERG27, leads to the production of fecosterol via 4-methylfecosterol. ERG28 has a role as a scaffold to help anchor ERG25, ERG26 and ERG27 to the endoplasmic reticulum. The C-8 sterol isomerase ERG2 then catalyzes the reaction which results in unsaturation at C-7 in the B ring of sterols and thus converts fecosterol to episterol. The sterol-C5-desaturases ERG3A and ERG3BB then catalyze the introduction of a C-5 double bond in the B ring to produce 5-dehydroepisterol. The C-22 sterol desaturases ERG5A and ERG5B further convert 5-dehydroepisterol into ergosta-5,7,22,24(28)-tetraen-3beta-ol by forming the C-22(23) double bond in the sterol side chain. Finally, ergosta-5,7,22,24(28)-tetraen-3beta-ol is substrate of the C-24(28) sterol reductase ERG4 to produce ergosterol. The chain is C-22 sterol desaturase ERG5A from Gibberella zeae (strain ATCC MYA-4620 / CBS 123657 / FGSC 9075 / NRRL 31084 / PH-1) (Wheat head blight fungus).